The primary structure comprises 165 residues: Nucleotide-binding protein MXAN_1478 (165 aa).

It belongs to the YajQ family.

In terms of biological role, nucleotide-binding protein. The sequence is that of Nucleotide-binding protein MXAN_1478 from Myxococcus xanthus (strain DK1622).